Reading from the N-terminus, the 126-residue chain is Glycerol dehydrogenase small subunit (126 aa).

The next 4 membrane-spanning stretches (helical) occupy residues 13–33 (WLTL…VIAG), 41–61 (GSVY…FMLM), 67–87 (AFLY…EVGF), and 92–112 (LLPR…TIPV).

The protein resides in the cell membrane. The enzyme catalyses glycerol + A = dihydroxyacetone + AH2. Its function is as follows. Catalyzes the oxidation of glycerol to glycerone. Also acts, more slowly, on a number of other polyols including D-sorbitol, D-arabinitol, D-mannitol, meso-erythritol, adonitol and propylene glycol. The chain is Glycerol dehydrogenase small subunit (sldB) from Gluconobacter oxydans (strain 621H) (Gluconobacter suboxydans).